Reading from the N-terminus, the 244-residue chain is Biosynthetic peptidoglycan transglycosylase (244 aa).

The helical transmembrane segment at 26–46 (FLSYFIGLTVALTFLFRFVPI) threads the bilayer.

This sequence belongs to the glycosyltransferase 51 family.

Its subcellular location is the cell inner membrane. The enzyme catalyses [GlcNAc-(1-&gt;4)-Mur2Ac(oyl-L-Ala-gamma-D-Glu-L-Lys-D-Ala-D-Ala)](n)-di-trans,octa-cis-undecaprenyl diphosphate + beta-D-GlcNAc-(1-&gt;4)-Mur2Ac(oyl-L-Ala-gamma-D-Glu-L-Lys-D-Ala-D-Ala)-di-trans,octa-cis-undecaprenyl diphosphate = [GlcNAc-(1-&gt;4)-Mur2Ac(oyl-L-Ala-gamma-D-Glu-L-Lys-D-Ala-D-Ala)](n+1)-di-trans,octa-cis-undecaprenyl diphosphate + di-trans,octa-cis-undecaprenyl diphosphate + H(+). The protein operates within cell wall biogenesis; peptidoglycan biosynthesis. In terms of biological role, peptidoglycan polymerase that catalyzes glycan chain elongation from lipid-linked precursors. The chain is Biosynthetic peptidoglycan transglycosylase from Mannheimia succiniciproducens (strain KCTC 0769BP / MBEL55E).